A 517-amino-acid polypeptide reads, in one-letter code: L-amino-acid oxidase (517 aa).

An N-terminal signal peptide occupies residues 1–18; that stretch reads MNVFFMFSLLFLAALESC. An intrachain disulfide couples C29 to C192. FAD contacts are provided by residues 62 to 63, 82 to 83, R90, and 106 to 109; these read MA, EA, and GPMR. Position 109 (R109) interacts with substrate. N191 carries an N-linked (GlcNAc...) asparagine glycan. V280 contributes to the FAD binding site. A disulfide bridge links C350 with C431. The N-linked (GlcNAc...) asparagine glycan is linked to N380. Y391 lines the substrate pocket. Residues E476 and 483-488 each bind FAD; that span reads GWLDST. 483 to 484 is a binding site for substrate; that stretch reads GW.

It belongs to the flavin monoamine oxidase family. FIG1 subfamily. In terms of assembly, homodimer; non-covalently linked. Requires FAD as cofactor. N-glycosylated. In terms of tissue distribution, expressed by the venom gland.

It localises to the secreted. The enzyme catalyses an L-alpha-amino acid + O2 + H2O = a 2-oxocarboxylate + H2O2 + NH4(+). In terms of biological role, catalyzes an oxidative deamination of predominantly hydrophobic and aromatic L-amino acids, thus producing hydrogen peroxide that may contribute to the diverse toxic effects of this enzyme. Exhibits diverse biological activities, such as hemorrhage, hemolysis, edema, apoptosis of vascular endothelial cells or tumor cell lines, antibacterial and antiparasitic activities, as well as regulation of platelet aggregation. Effects of snake L-amino oxidases on platelets are controversial, since they either induce aggregation or inhibit agonist-induced aggregation. These different effects are probably due to different experimental conditions. The polypeptide is L-amino-acid oxidase (Notechis scutatus scutatus (Mainland tiger snake)).